A 742-amino-acid chain; its full sequence is Feeding circuit activating peptides (742 aa).

An N-terminal signal peptide occupies residues 1–22; the sequence is MTFAASFRALLCVLFCAALVHC. Residues 23–98 constitute a propeptide that is removed on maturation; the sequence is KTRTKRYVPH…YGALADRDVD (76 aa). The propeptide at 117 to 131 is connecting peptide; that stretch reads GSLDAIPQDTDASSD. Propeptides lie at residues 164–168, 202–220, 236–253, 271–275, 293–297, 315–321, 339–341, 359–366, 384–388, 406–410, 428–432, 450–454, 472–476, 494–498, 516–520, 538–542, 560–564, 582–592, 610–614, and 647–742; these read GSGAE, RGTG…PWGS, DTEL…TEVN, SGEAG, ADDQG, FDNSAGE, AGD, FDNDISGQ, SDQDN, ADDDG, ADEDD, GDEDD, SDEDD, NSPGL, NNEYYSGAENE, DQPGE, and NSAD…AGQM.

In terms of tissue distribution, expressed in pleural, pedal, abdominal, buccal and cerebral ganglia.

The protein localises to the secreted. In terms of biological role, initiates organized rhythmic motor output of feeding circuit. This Aplysia californica (California sea hare) protein is Feeding circuit activating peptides.